We begin with the raw amino-acid sequence, 550 residues long: Glucose-6-phosphate isomerase (550 aa).

Glu357 acts as the Proton donor in catalysis. Residues His389 and Lys509 contribute to the active site.

It belongs to the GPI family.

Its subcellular location is the cytoplasm. It carries out the reaction alpha-D-glucose 6-phosphate = beta-D-fructose 6-phosphate. It functions in the pathway carbohydrate biosynthesis; gluconeogenesis. Its pathway is carbohydrate degradation; glycolysis; D-glyceraldehyde 3-phosphate and glycerone phosphate from D-glucose: step 2/4. Its function is as follows. Catalyzes the reversible isomerization of glucose-6-phosphate to fructose-6-phosphate. The protein is Glucose-6-phosphate isomerase of Anaeromyxobacter dehalogenans (strain 2CP-C).